The chain runs to 128 residues: uncharacterized protein (128 aa).

This is an uncharacterized protein from Schizosaccharomyces pombe (strain 972 / ATCC 24843) (Fission yeast).